The primary structure comprises 570 residues: Sulfite reductase [NADPH] hemoprotein beta-component (570 aa).

[4Fe-4S] cluster-binding residues include C434, C440, C479, and C483. Residue C483 participates in siroheme binding.

Belongs to the nitrite and sulfite reductase 4Fe-4S domain family. Alpha(8)-beta(8). The alpha component is a flavoprotein, the beta component is a hemoprotein. The cofactor is siroheme. Requires [4Fe-4S] cluster as cofactor.

The enzyme catalyses hydrogen sulfide + 3 NADP(+) + 3 H2O = sulfite + 3 NADPH + 4 H(+). It participates in sulfur metabolism; hydrogen sulfide biosynthesis; hydrogen sulfide from sulfite (NADPH route): step 1/1. Component of the sulfite reductase complex that catalyzes the 6-electron reduction of sulfite to sulfide. This is one of several activities required for the biosynthesis of L-cysteine from sulfate. The polypeptide is Sulfite reductase [NADPH] hemoprotein beta-component (Klebsiella pneumoniae subsp. pneumoniae (strain ATCC 700721 / MGH 78578)).